A 382-amino-acid polypeptide reads, in one-letter code: Proton extrusion protein PxcA (382 aa).

The next 4 helical transmembrane spans lie at 156 to 176 (TLIS…VQQV), 257 to 277 (AVKN…VCVF), 305 to 325 (IILF…TVLL), and 340 to 360 (FILL…KYWI).

This sequence belongs to the CemA family.

The protein localises to the cell inner membrane. Required for H(+) efflux immediately after light irradiation to form a rapid H(+) concentration gradient across the thylakoid membranes. Together with PxcL, contributes to transient H(+) uptake following dark to light transition. The polypeptide is Proton extrusion protein PxcA (Synechococcus sp. (strain WH7803)).